A 216-amino-acid chain; its full sequence is MAASPRNSVLLAFALLCLPWPQEVGAFPAMPLSSLFANAVLRAQHLHQLAADTYKEFERAYIPEGQRYSIQNAQAAFCFSETIPAPTGKDEAQQRSDVELLRFSLLLIQSWLGPVQFLSRVFTNSLVFGTSDRVYEKLKDLEEGIQALMRELEDGSPRAGQILKQTYDKFDTNLRSDDALLKNYGLLSCFKKDLHKAETYLRVMKCRRFVESSCAF.

A signal peptide spans 1-26 (MAASPRNSVLLAFALLCLPWPQEVGA). Residue H45 coordinates Zn(2+). C78 and C189 form a disulfide bridge. Phosphoserine is present on S131. A Zn(2+)-binding site is contributed by E198. Cysteines 206 and 214 form a disulfide.

This sequence belongs to the somatotropin/prolactin family.

The protein localises to the secreted. Functionally, plays an important role in growth control. Its major role in stimulating body growth is to stimulate the liver and other tissues to secrete IGF1. It stimulates both the differentiation and proliferation of myoblasts. It also stimulates amino acid uptake and protein synthesis in muscle and other tissues. This is Somatotropin (GH1) from Canis lupus familiaris (Dog).